The primary structure comprises 825 residues: Penicillin-binding protein 1A (825 aa).

At 1 to 6 (MKFIKR) the chain is on the cytoplasmic side. Residues 7-27 (LLVFSLICIILGVTTIFGFYF) traverse the membrane as a helical; Signal-anchor for type II membrane protein segment. The Periplasmic portion of the chain corresponds to 28-825 (YVKSDLPDVA…YSTSSGEELF (798 aa)). The interval 48–216 (MQVFSQDGKL…STMNPIYSVE (169 aa)) is transglycosylase. The Proton donor; for transglycosylase activity role is filled by Glu86. A transpeptidase region spans residues 413–752 (PRTQDGAITA…GKTALPAWVE (340 aa)). The active-site Acyl-ester intermediate; for transpeptidase activity is Ser471.

The protein in the N-terminal section; belongs to the glycosyltransferase 51 family. It in the C-terminal section; belongs to the transpeptidase family.

Its subcellular location is the cell inner membrane. The catalysed reaction is [GlcNAc-(1-&gt;4)-Mur2Ac(oyl-L-Ala-gamma-D-Glu-L-Lys-D-Ala-D-Ala)](n)-di-trans,octa-cis-undecaprenyl diphosphate + beta-D-GlcNAc-(1-&gt;4)-Mur2Ac(oyl-L-Ala-gamma-D-Glu-L-Lys-D-Ala-D-Ala)-di-trans,octa-cis-undecaprenyl diphosphate = [GlcNAc-(1-&gt;4)-Mur2Ac(oyl-L-Ala-gamma-D-Glu-L-Lys-D-Ala-D-Ala)](n+1)-di-trans,octa-cis-undecaprenyl diphosphate + di-trans,octa-cis-undecaprenyl diphosphate + H(+). The enzyme catalyses Preferential cleavage: (Ac)2-L-Lys-D-Ala-|-D-Ala. Also transpeptidation of peptidyl-alanyl moieties that are N-acyl substituents of D-alanine.. It functions in the pathway cell wall biogenesis; peptidoglycan biosynthesis. In terms of biological role, cell wall formation. Synthesis of cross-linked peptidoglycan from the lipid intermediates. The enzyme has a penicillin-insensitive transglycosylase N-terminal domain (formation of linear glycan strands) and a penicillin-sensitive transpeptidase C-terminal domain (cross-linking of the peptide subunits). The sequence is that of Penicillin-binding protein 1A (mrcA) from Vibrio cholerae serotype O1 (strain ATCC 39315 / El Tor Inaba N16961).